The primary structure comprises 2055 residues: Citron rho-interacting kinase (2055 aa).

Positions 97–359 (FEVRSLVGCG…FEGLCCHPFF (263 aa)) constitute a Protein kinase domain. ATP contacts are provided by residues 103–111 (VGCGHFAEV) and Lys-126. Asp-221 (proton acceptor) is an active-site residue. The region spanning 360–430 (ARTDWNNIRN…SKALGYLGRS (71 aa)) is the AGC-kinase C-terminal domain. Positions 375–398 (VPTLKSDDDTSNFDEPEKNSWVSS) are disordered. 3 coiled-coil regions span residues 457 to 747 (LQDS…AQVS), 773 to 1238 (IKKD…LEYQ), and 1284 to 1318 (YNELKLALEKEKARCAELEEALQKTRIELRSAREE). Residues 1349–1376 (PEHQPSAMSLLAPPSSRRKEASTPEEFS) are disordered. Residues 1353 to 1363 (PSAMSLLAPPS) are compositionally biased toward low complexity. Basic and acidic residues predominate over residues 1365–1376 (RRKEASTPEEFS). Residues 1388 to 1437 (PHRFNVGLNMRATKCAVCLDTVHFGRQASKCLECQVMCHPKCSTCLPATC) form a Phorbol-ester/DAG-type zinc finger. The 121-residue stretch at 1469–1589 (SLHLEGWMKV…WVTALESVVA (121 aa)) folds into the PH domain. The CNH domain maps to 1617-1907 (RLDMNCTLPF…RYLGPAISSG (291 aa)). The segment at 1932 to 2040 (SGTEQHRVPS…RGRLPAGAVR (109 aa)) is disordered. The segment covering 1939–1948 (VPSTSRSSPN) has biased composition (polar residues). The segment covering 1974-2031 (SHPREPSTPHRYRDREGRTELRRDKSPGRPLEREKSPGRMLSTRRERSPGRLFEDSSR) has biased composition (basic and acidic residues).

The protein belongs to the protein kinase superfamily. AGC Ser/Thr protein kinase family. In terms of assembly, homodimer. Directly interacts with KIF14 depending on the activation state (stronger interaction with the kinase-dead form). Interacts with TTC3.

The protein localises to the cytoplasm. It catalyses the reaction L-seryl-[protein] + ATP = O-phospho-L-seryl-[protein] + ADP + H(+). It carries out the reaction L-threonyl-[protein] + ATP = O-phospho-L-threonyl-[protein] + ADP + H(+). Functionally, plays a role in cytokinesis. Required for KIF14 localization to the central spindle and midbody. Putative RHO/RAC effector that binds to the GTP-bound forms of RHO and RAC1. It probably binds p21 with a tighter specificity in vivo. Displays serine/threonine protein kinase activity. Plays an important role in the regulation of cytokinesis and the development of the central nervous system. Phosphorylates MYL9/MLC2. This is Citron rho-interacting kinase from Rattus norvegicus (Rat).